The sequence spans 436 residues: MEEAETNTQVDSVPSNSVRSGAELSSKSKLRDSCHACARSKVRCPKQKPSCSRCEARGTTCQYFFSRRPGRRRETSKSPNPEKQIAIGSSHANNRNSPSFSSTRSTLPSPIASDSNSNFTQPQNSSITTVHNGPENSIESPCWEDFSCEFSDTDFVMPTIDTPFDLSPAYSGSVVQEMNDTAPFPLSSSRISMGTTPSGKSSISSYSQILPSITPTTTPVAHISSCRCLATALDLLKTLSLAGLADADSLVSAPIILAENKQSIESVNNLMACPLCSGDSFPLTIFSMIALKILERYAVAARTQHQGTRPQEAEGTVEIKLADIVISNNEDQTRLPSHSNIVCCDDKTQARAAAQLVLGELHHMQRLVNQLSSMIKRSAERDGRKLEILNGYNDSIDSGNSMLASFSASTLELVESDVRKSLRSLSTDIIKELRQH.

The span at 1–27 shows a compositional bias: polar residues; the sequence is MEEAETNTQVDSVPSNSVRSGAELSSK. The disordered stretch occupies residues 1–32; that stretch reads MEEAETNTQVDSVPSNSVRSGAELSSKSKLRD. A DNA-binding region (zn(2)-C6 fungal-type) is located at residues 34 to 61; the sequence is CHACARSKVRCPKQKPSCSRCEARGTTC. The tract at residues 67-136 is disordered; sequence RRPGRRRETS…ITTVHNGPEN (70 aa). Residues 90 to 136 show a composition bias toward polar residues; it reads SHANNRNSPSFSSTRSTLPSPIASDSNSNFTQPQNSSITTVHNGPEN.

It localises to the nucleus. In terms of biological role, transcriptional regulator; part of the gene cluster that mediates the biosynthesis of the dimeric xanthones cryptosporioptides. This Cryptosporiopsis sp. (strain 8999) protein is Transcriptional regulator dmxR14.